Here is a 278-residue protein sequence, read N- to C-terminus: Elongation factor Ts (278 aa).

Residues 80 to 83 form an involved in Mg(2+) ion dislocation from EF-Tu region; sequence TDFV.

This sequence belongs to the EF-Ts family.

The protein resides in the cytoplasm. Associates with the EF-Tu.GDP complex and induces the exchange of GDP to GTP. It remains bound to the aminoacyl-tRNA.EF-Tu.GTP complex up to the GTP hydrolysis stage on the ribosome. The polypeptide is Elongation factor Ts (Micrococcus luteus (strain ATCC 4698 / DSM 20030 / JCM 1464 / CCM 169 / CCUG 5858 / IAM 1056 / NBRC 3333 / NCIMB 9278 / NCTC 2665 / VKM Ac-2230) (Micrococcus lysodeikticus)).